The chain runs to 136 residues: Large ribosomal subunit protein eL27 (136 aa).

Positions 5–40 (MKPGKVVMVLAGRYAGRKAVIVKNIDDGTADRPYSH) constitute a KOW domain.

Belongs to the eukaryotic ribosomal protein eL27 family. As to quaternary structure, component of the large ribosomal subunit.

It is found in the cytoplasm. It localises to the cytosol. The protein localises to the rough endoplasmic reticulum. Its function is as follows. Component of the large ribosomal subunit. The chain is Large ribosomal subunit protein eL27 (rpl27) from Danio rerio (Zebrafish).